A 98-amino-acid polypeptide reads, in one-letter code: Cell division topological specificity factor (98 aa).

This sequence belongs to the MinE family.

Prevents the cell division inhibition by proteins MinC and MinD at internal division sites while permitting inhibition at polar sites. This ensures cell division at the proper site by restricting the formation of a division septum at the midpoint of the long axis of the cell. The polypeptide is Cell division topological specificity factor (Methylorubrum populi (strain ATCC BAA-705 / NCIMB 13946 / BJ001) (Methylobacterium populi)).